The chain runs to 428 residues: Threonine synthase (428 aa).

The residue at position 107 (Lys107) is an N6-(pyridoxal phosphate)lysine.

It belongs to the threonine synthase family. Requires pyridoxal 5'-phosphate as cofactor.

It catalyses the reaction O-phospho-L-homoserine + H2O = L-threonine + phosphate. It participates in amino-acid biosynthesis; L-threonine biosynthesis; L-threonine from L-aspartate: step 5/5. With respect to regulation, is competitively inhibited by L-threo-3-hydroxyhomoserine phosphate. In terms of biological role, catalyzes the gamma-elimination of phosphate from L-phosphohomoserine and the beta-addition of water to produce L-threonine. To a lesser extent, is able to slowly catalyze the deamination of L-threonine into alpha-ketobutyrate and that of L-serine and 3-chloroalanine into pyruvate. Is also able to rapidly convert vinylglycine to threonine, which proves that the pyridoxal p-quinonoid of vinylglycine is an intermediate in the TS reaction. This is Threonine synthase (thrC) from Escherichia coli (strain K12).